The following is a 348-amino-acid chain: tRNA pseudouridine synthase D (348 aa).

Aspartate 78 (nucleophile) is an active-site residue. The region spanning 150–304 is the TRUD domain; the sequence is GLPNFFGPQR…AEGTRRAARL (155 aa).

The protein belongs to the pseudouridine synthase TruD family.

The catalysed reaction is uridine(13) in tRNA = pseudouridine(13) in tRNA. Functionally, responsible for synthesis of pseudouridine from uracil-13 in transfer RNAs. This Anaeromyxobacter dehalogenans (strain 2CP-1 / ATCC BAA-258) protein is tRNA pseudouridine synthase D.